The sequence spans 93 residues: MSCRYRICRDIWRGKCIYVFRCLYTNHAVVSWNQTNEVIGLYKANEHKFMNNRKQSHIKNGLVVSYSILYPVGKGRSLRSTGVVLILGPVKEY.

This is an uncharacterized protein from Schizosaccharomyces pombe (strain 972 / ATCC 24843) (Fission yeast).